The chain runs to 87 residues: UPF0250 protein ECA1299 (87 aa).

Belongs to the UPF0250 family.

The protein is UPF0250 protein ECA1299 of Pectobacterium atrosepticum (strain SCRI 1043 / ATCC BAA-672) (Erwinia carotovora subsp. atroseptica).